Here is a 264-residue protein sequence, read N- to C-terminus: Nuclear egress protein 1 (264 aa).

Basic residues predominate over residues 1-12; it reads MTVHKNRFRRSR. Residues 1 to 22 are disordered; the sequence is MTVHKNRFRRSRSLSVTHRIQK. Residues 83-187 form a CCCH-type zinc finger; that stretch reads CLEFSPYANE…HIVFQSRTLH (105 aa).

The protein belongs to the herpesviridae NEC1 protein family. As to quaternary structure, forms a heterohexameric complex with NEC2. Interacts with capsid vertex specific component 2/CVC2; this interaction directs the capsid to the host inner nuclear membrane to initiate budding. Phosphorylated at serine residues in the N-terminus. This phosphorylation regulates the localization within the inner nuclear membrane.

It localises to the host nucleus inner membrane. Its function is as follows. Plays an essential role in virion nuclear egress, the first step of virion release from infected cell. Within the host nucleus, NEC1 interacts with the newly formed capsid through the vertexes and directs it to the inner nuclear membrane by associating with NEC2. Induces the budding of the capsid at the inner nuclear membrane as well as its envelopment into the perinuclear space. There, the NEC1/NEC2 complex promotes the fusion of the enveloped capsid with the outer nuclear membrane and the subsequent release of the viral capsid into the cytoplasm where it will reach the secondary budding sites in the host Golgi or trans-Golgi network. This is Nuclear egress protein 1 from Human herpesvirus 6B (HHV-6 variant B).